The following is a 200-amino-acid chain: Sorting nexin-10 (200 aa).

The required for interaction with ATP6V1D stretch occupies residues 8–125 (EEFVSVWVRD…SLHLFLQSHL (118 aa)). Residues 10 to 127 (FVSVWVRDPR…HLFLQSHLNS (118 aa)) enclose the PX domain. Residues Arg53, Lys79, and Arg94 each coordinate a 1,2-diacyl-sn-glycero-3-phospho-(1D-myo-inositol-3-phosphate). Over residues 156–167 (FPEEEEGKKEND) the composition is skewed to basic and acidic residues. A disordered region spans residues 156-200 (FPEEEEGKKENDIDYDSESSSSGFGHSSDDSSSHGCKMSTAPQES).

Belongs to the sorting nexin family. As to quaternary structure, interacts with ATP6V1D; may play a role in ciliogenesis.

The protein resides in the cytoplasm. The protein localises to the endosome membrane. It is found in the cytoskeleton. It localises to the microtubule organizing center. Its subcellular location is the centrosome. In terms of biological role, probable phosphoinositide-binding protein involved in protein sorting and membrane trafficking in endosomes. Plays a role in cilium biogenesis through regulation of the transport and the localization of proteins to the cilium. Required for the localization to the cilium of V-ATPase subunit ATP6V1D and ATP6V0D1, and RAB8A. Involved in osteoclast differentiation and therefore bone resorption. The sequence is that of Sorting nexin-10 (SNX10) from Bos taurus (Bovine).